The chain runs to 523 residues: Putative L-type lectin-domain containing receptor kinase V.6 (523 aa).

An N-terminal signal peptide occupies residues 1–27 (MFSEVKVLQIVLVQWLTLFSFTYNSHG). A legume-lectin like region spans residues 28 to 242 (TYILDGSAVF…TGSIRALHYM (215 aa)). The Extracellular segment spans residues 28 to 279 (TYILDGSAVF…KPSDRLRTVL (252 aa)). N-linked (GlcNAc...) asparagine glycans are attached at residues Asn-47, Asn-59, Asn-112, and Asn-171. A helical transmembrane segment spans residues 280–300 (AVCLTLALFAVFLASGIGFVF). Over 301-523 (YLRHKKVKEV…TGRAVRVKFF (223 aa)) the chain is Cytoplasmic. Positions 335–523 (FKEKQLLGKG…TGRAVRVKFF (189 aa)) constitute a Protein kinase domain. Residues 341-349 (LGKGGFGQV) and Lys-364 contribute to the ATP site. The active-site Proton acceptor is the Asp-464.

This sequence in the C-terminal section; belongs to the protein kinase superfamily. Ser/Thr protein kinase family. It in the N-terminal section; belongs to the leguminous lectin family.

Its subcellular location is the cell membrane. It catalyses the reaction L-seryl-[protein] + ATP = O-phospho-L-seryl-[protein] + ADP + H(+). The catalysed reaction is L-threonyl-[protein] + ATP = O-phospho-L-threonyl-[protein] + ADP + H(+). The protein is Putative L-type lectin-domain containing receptor kinase V.6 (LECRK56) of Arabidopsis thaliana (Mouse-ear cress).